A 340-amino-acid polypeptide reads, in one-letter code: Phenylalanine--tRNA ligase alpha subunit (340 aa).

E255 contributes to the Mg(2+) binding site.

Belongs to the class-II aminoacyl-tRNA synthetase family. Phe-tRNA synthetase alpha subunit type 1 subfamily. In terms of assembly, tetramer of two alpha and two beta subunits. Requires Mg(2+) as cofactor.

It localises to the cytoplasm. It carries out the reaction tRNA(Phe) + L-phenylalanine + ATP = L-phenylalanyl-tRNA(Phe) + AMP + diphosphate + H(+). The protein is Phenylalanine--tRNA ligase alpha subunit of Heliobacterium modesticaldum (strain ATCC 51547 / Ice1).